The sequence spans 533 residues: Glucosidase 2 subunit beta (533 aa).

An N-terminal signal peptide occupies residues 1 to 13 (MLLLLLLLPMCWA). Ser-23 carries the phosphoserine modification. LDL-receptor class A domains are found at residues 36–70 (FTCL…AACP) and 71–112 (NGSF…IVCE). 2 cysteine pairs are disulfide-bonded: Cys-38–Cys-57 and Cys-55–Cys-69. Asp-48 lines the substrate pocket. Gln-49, Asp-52, Tyr-54, Asp-56, Asp-62, and Glu-63 together coordinate Ca(2+). Substrate is bound at residue Asp-52. Asn-71 carries an N-linked (GlcNAc...) asparagine glycan. Intrachain disulfides connect Cys-76/Cys-98, Cys-96/Cys-111, and Cys-99/Cys-115. A Phosphoserine; by PKC modification is found at Ser-88. The Ca(2+) site is built by Asp-93, Val-95, Asp-97, Asp-103, and Glu-104. N6-succinyllysine is present on Lys-165. Ser-167 carries the phosphoserine modification. EF-hand domains are found at residues 208–243 (RERE…DTDG) and 244–279 (DGAL…RDKY). Ca(2+) is bound by residues Asp-221, Asp-223, Asp-225, and Glu-232. Positions 284 to 363 (LPTEYPPSPP…SPTEEDRMPP (80 aa)) are disordered. The segment covering 312–336 (TEEEDEDEEDEETEEDEDEEDEDSQ) has biased composition (acidic residues). Phosphoserine; by PKC occurs at positions 388 and 395. The MRH domain occupies 418–519 (SQCYELTTNE…ELMTPAACPE (102 aa)). The cysteines at positions 420 and 433 are disulfide-linked. Ser-439 is modified (phosphoserine; by PKC). 2 disulfides stabilise this stretch: Cys-476/Cys-505 and Cys-490/Cys-517. Asn-481 is a glycosylation site (N-linked (GlcNAc...) asparagine). The Prevents secretion from ER motif lies at 530–533 (HDEL).

Heterodimer of a catalytic alpha subunit (GANAB) and a beta subunit (PRKCSH). Binds glycosylated PTPRC. As to expression, ubiquitous. Highly expressed in liver, spleen, lung, duodenum, stomach, adrenal gland, pituitary, testis, corpus luteum, uterus and fetal ovary.

The protein localises to the endoplasmic reticulum. Its pathway is glycan metabolism; N-glycan metabolism. Regulatory subunit of glucosidase II that cleaves sequentially the 2 innermost alpha-1,3-linked glucose residues from the Glc(2)Man(9)GlcNAc(2) oligosaccharide precursor of immature glycoproteins. Required for efficient PKD1/Polycystin-1 biogenesis and trafficking to the plasma membrane of the primary cilia. The polypeptide is Glucosidase 2 subunit beta (PRKCSH) (Bos taurus (Bovine)).